The following is a 230-amino-acid chain: MSKETSFVKNAEELAKQKMDAINPELSSKFKFLIKFLSQFPEACSKPRSKKMQNKVGQEEHIEYLARSFHESRLPRKPTPPTTVPDEVVSIVLNISFNIQPENLERIKEEHRLSMAAENIVGDLLERYLAEKLEPSGWIWCSGTSVKAVDFIHYDEKNNEWNLLQVKNRDNTENSSSSKIRDNTTIKKWFRTYSQRDATNWDNFPDEVSSKNLNEEDFRAFVKNYLVKII.

The catalysed reaction is Endonucleolytic cleavage of DNA to give specific double-stranded fragments with terminal 5'-phosphates.. In terms of biological role, a P subtype restriction enzyme that recognizes the double-stranded sequence 5'-GGWCC-3' and cleaves after G-1. The protein is Type II restriction enzyme Eco47I of Escherichia coli.